Here is a 271-residue protein sequence, read N- to C-terminus: Magnetosome protein MamX (271 aa).

Topologically, residues 1-10 (MSSKAVAHPN) are cytoplasmic. Residues 11 to 31 (IAVWIMALGIAFSMALVLTAV) traverse the membrane as a helical segment. At 32 to 271 (FNANPWEDHT…NAGGMDAEER (240 aa)) the chain is on the lumenal side. Residues 48–71 (IVAGMPAPHRDGREKMVCSSCHIV) carry the MCR (magnetochrome) 1 motif. Heme contacts are provided by Cys65, Cys68, His69, Cys104, Cys107, and His108. Positions 87-110 (IVQGTPAPHVDGREKMPCASCHTI) match the MCR 2 motif.

Belongs to the magnetosome MamX family. It depends on heme as a cofactor.

The protein resides in the magnetosome membrane. Its function is as follows. Required for correct biomineralization of the magnetosome, may be involved in redox control of biomineralization. May function with MamY, MamZ amd Mms6. The protein is Magnetosome protein MamX (mamX) of Paramagnetospirillum magneticum (strain ATCC 700264 / AMB-1) (Magnetospirillum magneticum).